The primary structure comprises 770 residues: Proton-coupled zinc antiporter SLC30A5 (770 aa).

At 1–29 (MEEKYSSQALAGGGVLGPVDVPSARLTRY) the chain is on the cytoplasmic side. The helical transmembrane segment at 30 to 50 (IVLLCFAKFLKAVGLFESYDL) threads the bilayer. Topologically, residues 51–53 (LKA) are lumenal. The helical transmembrane segment at 54–74 (VHLVQFIFIVKLGSAFFMVLF) threads the bilayer. At 75–95 (QKPFSSGKVVTKHQWIKIFKH) the chain is on the cytoplasmic side. A helical membrane pass occupies residues 96 to 116 (AVVGCIISLLWFFGLTLCGPL). Residue Arg-117 is a topological domain, lumenal. Residues 118 to 138 (TLLLFEHSDVVVLSLLSVLFT) traverse the membrane as a helical segment. The Cytoplasmic portion of the chain corresponds to 139-149 (SSGGGPAKTRG). The helical transmembrane segment at 150–170 (AAFFIIAVICLLLFDNDDLMA) threads the bilayer. At 171–190 (KIAEHPEGHHDSALTHVLYT) the chain is on the lumenal side. A helical transmembrane segment spans residues 191-211 (VIAFLGVADHKGGVLLLVLAL). The Cytoplasmic portion of the chain corresponds to 212–235 (CCKVGFHMASRKLSVDVGGAKRLQ). The helical transmembrane segment at 236 to 256 (ALSHLVSVLLLCPWVIVLSLT) threads the bilayer. Over 257–264 (TESKVESW) the chain is Lumenal. A helical membrane pass occupies residues 265–285 (SSLIMPFITVIFFVVILDFYV). The Cytoplasmic segment spans residues 286-300 (ESICSVKMESSKCAR). The chain crosses the membrane as a helical span at residues 301-321 (YGSFLIFISALLFGNFWTHPI). At 322-339 (TDQLRAMNKPAHHESTEH) the chain is on the lumenal side. Residues 340 to 360 (VLSGGVVVSAVFFILSANILS) traverse the membrane as a helical segment. At 361–415 (SPSRKGQKGTLIGYSPEGTPLYNFMGDAIQQSSQSLPRFIKESLKQILEEYDSRQ) the chain is on the cytoplasmic side. The chain crosses the membrane as a helical span at residues 416 to 436 (IFYFLCLNLAFTFVELFYGVW). The Lumenal portion of the chain corresponds to 437–445 (TNSLGLISD). The helical transmembrane segment at 446 to 466 (GFHMLFDCSALVMGLFAALMT) threads the bilayer. His-448 and Asp-452 together coordinate Zn(2+). The Cytoplasmic portion of the chain corresponds to 467–480 (RWKATRIFSYGYGR). The helical transmembrane segment at 481–501 (VEILSGFINGLFLMVIAFFVF) threads the bilayer. The Lumenal portion of the chain corresponds to 502–517 (MESVARLVDPPDIDTN). A helical membrane pass occupies residues 518–538 (MLTPVSVGGLIVNLVGICAFS). Residues 539–579 (HAHSHGASRGGCHSHEHSHSYHGHSHSHGHGHSHNDHGHSH) are his-rich loop; required for zinc transport. Over 539–597 (HAHSHGASRGGCHSHEHSHSYHGHSHSHGHGHSHNDHGHSHGHSHVSSGGGMNTNMRGV) the chain is Cytoplasmic. The interval 548 to 586 (GGCHSHEHSHSYHGHSHSHGHGHSHNDHGHSHGHSHVSS) is disordered. The span at 558-570 (SYHGHSHSHGHGH) shows a compositional bias: basic residues. The helical transmembrane segment at 598-618 (FLHVLADTLGSVGVIVSTTFI) threads the bilayer. Positions 600 and 604 each coordinate Zn(2+). Residues 619–622 (QQFG) lie on the Lumenal side of the membrane. A helical membrane pass occupies residues 623 to 643 (WLIADPLCSLFIATLIFLSVI). Topologically, residues 644–770 (PLLKDACQVL…KYYKDGTYIM (127 aa)) are cytoplasmic.

Belongs to the cation diffusion facilitator (CDF) transporter (TC 2.A.4) family. SLC30A subfamily. As to quaternary structure, heterodimer with SLC30A6/ZNT6; form a functional zinc ion transmembrane transporter.

The protein resides in the golgi apparatus. The protein localises to the golgi stack membrane. It is found in the cytoplasmic vesicle. It localises to the COPII-coated vesicle membrane. Its subcellular location is the secretory vesicle membrane. The protein resides in the trans-Golgi network membrane. It carries out the reaction Zn(2+)(in) + 2 H(+)(out) = Zn(2+)(out) + 2 H(+)(in). Its function is as follows. Together with SLC30A6 forms a functional proton-coupled zinc ion antiporter mediating zinc entry into the lumen of organelles along the secretory pathway. By contributing to zinc ion homeostasis within the early secretory pathway, regulates the activation and folding of enzymes like alkaline phosphatases and enzymes involved in phosphatidylinositol glycan anchor biosynthesis. This chain is Proton-coupled zinc antiporter SLC30A5, found in Gallus gallus (Chicken).